Here is a 591-residue protein sequence, read N- to C-terminus: Thiol:disulfide interchange protein DsbD 1 (591 aa).

An N-terminal signal peptide occupies residues 1-18 (MRRLLTLILLLVALPAGA). Over 19-175 (GLFDSRPGAS…GPLEHKGKRS (157 aa)) the chain is Periplasmic. 2 disulfide bridges follow: Cys-134–Cys-140 and Cys-191–Cys-313. A helical membrane pass occupies residues 176–196 (LLFFFLAGLTLTFTPCVLPML). Residues 197–213 (PILSGVVLRGRPGGGRG) lie on the Cytoplasmic side of the membrane. The helical transmembrane segment at 214–234 (FVLSLAYVLPMALCFALLGAL) threads the bilayer. Over 235–251 (MGMFGASLNLQAQLQSP) the chain is Periplasmic. A helical transmembrane segment spans residues 252–272 (WVLVPFAAFFALFAVAMFGFF). Residues 273-295 (ELRLPGFIREPLDRLAGDARGGS) are Cytoplasmic-facing. A helical membrane pass occupies residues 296 to 316 (ILGAATLGVLSSLLVSPCVSA). Residues 317–338 (PLAASLLYISASGDAWGGGLQL) are Periplasmic-facing. Residues 339 to 359 (FALGLGMGTPLVVFGAGGGAL) traverse the membrane as a helical segment. Residues 360–365 (LPKSGA) lie on the Cytoplasmic side of the membrane. A helical membrane pass occupies residues 366–386 (WMNGVRNAFGVLLLAVAVWLL). The Periplasmic segment spans residues 387 to 392 (ERVVSG). Residues 393-413 (PVALMLWGMLAGGAGLALGAL) traverse the membrane as a helical segment. The Cytoplasmic portion of the chain corresponds to 414-423 (EFTPKSAARR). The helical transmembrane segment at 424–444 (LLQLLGLMFLTYAVAAWIGAL) threads the bilayer. The Periplasmic segment spans residues 445–591 (QGESDPIHPL…ERLRRAATRQ (147 aa)). The Thioredoxin domain maps to 452–589 (HPLGRSVPSI…LAERLRRAAT (138 aa)). A disulfide bridge links Cys-504 with Cys-507.

It belongs to the thioredoxin family. DsbD subfamily.

The protein localises to the cell inner membrane. It carries out the reaction [protein]-dithiol + NAD(+) = [protein]-disulfide + NADH + H(+). It catalyses the reaction [protein]-dithiol + NADP(+) = [protein]-disulfide + NADPH + H(+). In terms of biological role, required to facilitate the formation of correct disulfide bonds in some periplasmic proteins and for the assembly of the periplasmic c-type cytochromes. Acts by transferring electrons from cytoplasmic thioredoxin to the periplasm. This transfer involves a cascade of disulfide bond formation and reduction steps. This chain is Thiol:disulfide interchange protein DsbD 1, found in Pseudomonas aeruginosa (strain ATCC 15692 / DSM 22644 / CIP 104116 / JCM 14847 / LMG 12228 / 1C / PRS 101 / PAO1).